The following is a 279-amino-acid chain: Presqualene diphosphate synthase (279 aa).

Belongs to the phytoene/squalene synthase family. HpnD subfamily.

It catalyses the reaction 2 (2E,6E)-farnesyl diphosphate = presqualene diphosphate + diphosphate. It functions in the pathway secondary metabolite biosynthesis; hopanoid biosynthesis. Functionally, involved in the biosynthesis of the hopanoid precursor squalene (SQ) from farnesyl diphosphate (FPP). Catalyzes the first step, the formation of presqualene diphosphate (PSPP) from two molecules of FPP. The polypeptide is Presqualene diphosphate synthase (Rhodopseudomonas palustris (strain ATCC BAA-98 / CGA009)).